The following is a 64-amino-acid chain: Small ribosomal subunit protein eS17 (64 aa).

Belongs to the eukaryotic ribosomal protein eS17 family.

The chain is Small ribosomal subunit protein eS17 from Methanosarcina barkeri (strain Fusaro / DSM 804).